Consider the following 1252-residue polypeptide: Nephrin (1252 aa).

The signal sequence occupies residues 1–35 (MGAKRVTVRGARTSPIHRMSSLTPLLLMGMLTSGL). Topologically, residues 36–1078 (AESPVPTSAP…PGPPRLPLLP (1043 aa)) are extracellular. Ig-like C2-type domains follow at residues 39–144 (PVPT…VILS), 149–247 (PKVL…ASFT), 256–347 (PPVI…RSIT), 354–448 (PSAI…KSLT), 454–554 (PAQK…TQLV), and 558–649 (PPTN…ETVS). N-linked (GlcNAc...) asparagine glycosylation is present at asparagine 54. 3 disulfides stabilise this stretch: cysteine 67/cysteine 125, cysteine 174/cysteine 231, and cysteine 279/cysteine 331. Asparagine 370 carries an N-linked (GlcNAc...) asparagine glycan. Cysteine 375 and cysteine 431 are oxidised to a cystine. At serine 446 the chain carries Phosphoserine. Cysteine 479 and cysteine 542 are oxidised to a cystine. 4 N-linked (GlcNAc...) asparagine glycosylation sites follow: asparagine 561, asparagine 578, asparagine 591, and asparagine 722. The cysteines at positions 581 and 637 are disulfide-linked. Ig-like C2-type domains lie at 754–846 (PTIR…LVRL) and 852–953 (PQVD…VSIS). 2 cysteine pairs are disulfide-bonded: cysteine 775–cysteine 830 and cysteine 877–cysteine 934. One can recognise a Fibronectin type-III domain in the interval 957 to 1052 (PPLGLKVVSI…IQVSVTTPGP (96 aa)). Positions 1043 to 1067 (IQVSVTTPGPDQAPEDTDHQLPTEL) are disordered. Residues 1079-1099 (VLFAVGGLLLLSNASCVGGLL) traverse the membrane as a helical segment. At 1100–1252 (WRRRLRRLAE…LPFELRGHLV (153 aa)) the chain is on the cytoplasmic side. Serine 1112 carries the post-translational modification Phosphoserine. A compositionally biased stretch (basic and acidic residues) spans 1113 to 1127 (EKTEAGSEDRIRNEY). A disordered region spans residues 1113–1144 (EKTEAGSEDRIRNEYEESQWTGDRDTRSSTVS). Position 1115 is a phosphothreonine (threonine 1115). Serine 1119 is subject to Phosphoserine. At tyrosine 1204 the chain carries Phosphotyrosine; by FYN.

This sequence belongs to the immunoglobulin superfamily. As to quaternary structure, interacts with NPHS2 and with CD2AP (via C-terminal domain). Self-associates (via the Ig-like domains). Also interacts (via the Ig-like domains) with KIRREL1/NEPH1 and KIRREL2; the interaction with KIRREL1 is dependent on KIRREL1 glycosylation. Interacts with KIRREL3. Interacts with MAGI1 (via PDZ 2 and 3 domains) forming a tripartite complex with IGSF5/JAM4. Interacts with DDN; the interaction is direct. Forms a complex with ACTN4, CASK, IQGAP1, MAGI2, SPTAN1 and SPTBN1. Interacts with phosphatidylinositol 3-kinase regulatory subunit PIK3R1; the interaction is reduced by high glucose levels. Post-translationally, phosphorylated at Tyr-1204 by FYN, leading to the recruitment and activation of phospholipase C-gamma-1/PLCG1. Tyrosine phosphorylation is reduced by high glucose levels. Dephosphorylated by tensin TNS2 which leads to reduced binding of NPHN1 to PIK3R1. In terms of tissue distribution, strongly expressed in the podocytes of kidney glomeruli (at protein level) and at lower levels in the spleen.

The protein resides in the cell membrane. In terms of biological role, seems to play a role in the development or function of the kidney glomerular filtration barrier. Regulates glomerular vascular permeability. May anchor the podocyte slit diaphragm to the actin cytoskeleton. Plays a role in skeletal muscle formation through regulation of myoblast fusion. The chain is Nephrin (Nphs1) from Rattus norvegicus (Rat).